A 605-amino-acid polypeptide reads, in one-letter code: F-box/WD repeat-containing protein 1A (605 aa).

The segment at alanine 128 to glutamine 177 is homodimerization domain D. One can recognise an F-box domain in the interval threonine 182–leucine 228. The segment at aspartate 190–leucine 228 is required for down-regulation of SNAI1. 7 WD repeats span residues glutamate 301–isoleucine 338, glycine 341–threonine 378, histidine 381–leucine 418, glycine 424–threonine 461, glycine 464–glutamate 503, histidine 505–alanine 541, and glutamate 553–alanine 590.

In terms of assembly, homodimer. Self-associates. Component of the SCF(BTRC) complex, composed of SKP1, CUL1 and BTRC. Direct interaction with SKP1 with SKP1 occurs via the F-box domain. Interacts with phosphorylated ubiquitination substrates SMAD3 and SMAD4. Interacts with phosphorylated ubiquitination substrates CTNNB1, NFKBIA, NFKBIB, NFKBIE, NFKB1/nuclear factor NF-kappa-B p105 subunit, ATF4, CDC25A, DLG1, FBXO5 and SNAI1; the interaction requires the phosphorylation of the 2 serine residues in the substrate destruction motif D-S-G-X(2,3,4)-S. Binds UBQLN1. Interacts with CDC34 and UBE2R2. Interacts with FBXW11. Interacts with CUL4A and DDB1. Part of a SCF(BTRC)-like complex lacking CUL1, which is associated with phosphorylated NKBIA and RELA; RELA interacts directly with NFKBIA. Interacts with the phosphorylated form of GLI3. Interacts with CLU. Interacts with PER1 (phosphorylated), PER2 (phosphorylated) and PER3. Interacts with phosphorylated ubiquitination substrate CEP68. Interacts with ZC3H12A; this interaction occurs when ZC3H12A is phosphorylated in a IKBKB/IKKB-dependent manner. Interacts with HSF1; this interaction occurs during mitosis and induces HSF1 ubiquitin-dependent degradation, a process inhibited by CDC20. Interacts with NFE2L1. Interacts with INAVA. Interacts with IL10RA; this interaction leads to IL10RA ubiquitination and subsequent degradation. Interacts with REST. Interacts with KLF4; this interaction leads to KLF4 ubiquitination and subsequent degradation. Interacts with UBR2, as part of a SCF(BTRC) complex; the interaction mediates 'Lys-48'-linked ubiquitination of UBR2 and is regulated by DUSP22 in the T-cell receptor signaling pathway. Post-translationally, ubiquitinated via 'Lys-11'-linked polyubiquitin by some cullin-5-RING E3 ubiquitin-protein ligase complex (ECS complex), leading to its degradation. Deubiquitinated by OTUD5, promoting its stability. As to expression, expressed in heart, brain, liver, skeletal muscle and, most strongly, in testis.

It localises to the cytoplasm. The protein localises to the nucleus. It participates in protein modification; protein ubiquitination. In terms of biological role, substrate recognition component of a SCF (SKP1-CUL1-F-box protein) E3 ubiquitin-protein ligase complex which mediates the ubiquitination and subsequent proteasomal degradation of target proteins. Recognizes and binds to phosphorylated target proteins. SCF(BTRC) mediates the ubiquitination of phosphorylated NFKB, ATF4, CDC25A, DLG1, FBXO5, PER1, SMAD3, SMAD4, SNAI1 and probably NFKB2. SCF(BTRC) mediates the ubiquitination of CTNNB1 and participates in Wnt signaling. SCF(BTRC) mediates the ubiquitination of NFKBIA, NFKBIB and NFKBIE; the degradation frees the associated NFKB1 to translocate into the nucleus and to activate transcription. Ubiquitination of NFKBIA occurs at 'Lys-21' and 'Lys-22'. The SCF(FBXW11) complex also regulates NF-kappa-B by mediating ubiquitination of phosphorylated NFKB1: specifically ubiquitinates the p105 form of NFKB1, leading to its degradation. SCF(BTRC) mediates the ubiquitination of CEP68; this is required for centriole separation during mitosis. SCF(BTRC) mediates the ubiquitination and subsequent degradation of nuclear NFE2L1. Has an essential role in the control of the clock-dependent transcription via degradation of phosphorylated PER1 and PER2. May be involved in ubiquitination and subsequent proteasomal degradation through a DBB1-CUL4 E3 ubiquitin-protein ligase. Required for activation of NFKB-mediated transcription by IL1B, MAP3K14, MAP3K1, IKBKB and TNF. Required for proteolytic processing of GLI3. Mediates ubiquitination of REST, thereby leading to its proteasomal degradation. SCF(BTRC) mediates the ubiquitination and subsequent proteasomal degradation of KLF4; thereby negatively regulating cell pluripotency maintenance and embryogenesis. SCF(BTRC) acts as a regulator of mTORC1 signaling pathway by catalyzing ubiquitination and subsequent proteasomal degradation of phosphorylated DEPTOR, TFE3 and MITF. SCF(BTRC) directs 'Lys-48'-linked ubiquitination of UBR2 in the T-cell receptor signaling pathway. The polypeptide is F-box/WD repeat-containing protein 1A (Mus musculus (Mouse)).